Here is a 537-residue protein sequence, read N- to C-terminus: Lysosomal cobalamin transport escort protein LMBD1 (537 aa).

Residues 1–7 lie on the Extracellular side of the membrane; it reads MAAAAAE. A helical transmembrane segment spans residues 8-28; the sequence is LVIGWCIFGLLLLAILAFCWV. Topologically, residues 29-47 are cytoplasmic; sequence YVRKYQSQRESEVVSTVTA. The helical transmembrane segment at 48–68 threads the bilayer; sequence IFSLAVALITSALLPVDIFLV. Residues 69–97 are Extracellular-facing; the sequence is SYMKNQNGTFKDWADANVTVQIENTVLYG. Asparagine 75 and asparagine 85 each carry an N-linked (GlcNAc...) asparagine glycan. A helical membrane pass occupies residues 98–118; the sequence is YYTLYSVILFCVFFWIPFVYF. The Cytoplasmic portion of the chain corresponds to 119 to 141; it reads YYEEKDEDDASKCTQIKTALKYT. A helical membrane pass occupies residues 142 to 162; the sequence is LGFVVICALLLLVGAFVPLHL. Residues 163 to 185 are Extracellular-facing; sequence PNNNNSTEWEKVKLLFEDLGTGQ. Asparagine 166 and asparagine 167 each carry an N-linked (GlcNAc...) asparagine glycan. A helical transmembrane segment spans residues 186 to 206; it reads GLAALSFSISSLTLIGMLAAI. Topologically, residues 207–302 are cytoplasmic; sequence TYTAYGMSAL…KFCGALRPLK (96 aa). Positions 229–232 match the YERL motif; mediates interaction with adapter protein complex 2 and is essential for its function in clathrin-mediated endocytosis of INSR motif; sequence YERL. Phosphothreonine is present on threonine 235. A WTKF motif; mediates interaction with adapter protein complex 2 and is essential for its function in clathrin-mediated endocytosis of INSR motif is present at residues 291-294; that stretch reads WTKF. Residues 303-323 traverse the membrane as a helical segment; it reads IIWGIFFILVALLFVISLFLS. The Extracellular segment spans residues 324–361; the sequence is NLDKALHSAGIDSGFIIFGTNLSNPLNMLLPLLQTVFP. Asparagine 344 carries N-linked (GlcNAc...) asparagine glycosylation. Residues 362 to 382 form a helical membrane-spanning segment; sequence LDYILITIIIMYFIFTSMAGI. Over 383–405 the chain is Cytoplasmic; sequence RNIGIWFFWIRLYKIRRGRTRPQ. Residues 406–426 traverse the membrane as a helical segment; it reads ALLFLCMILLLIVLHTSYMIY. Over 427 to 483 the chain is Extracellular; the sequence is SLAPQYVMYGSQNYLIESNITSDAHKGNSTLAVPKRCDADAPKDQCTVTRTYIFLHK. Residues asparagine 445 and asparagine 454 are each glycosylated (N-linked (GlcNAc...) asparagine). Residues 484 to 504 traverse the membrane as a helical segment; the sequence is FWFFSAAYYFGNWAFLVVFLI. The Cytoplasmic portion of the chain corresponds to 505 to 537; that stretch reads GLIVSCCKGKKSVIEGVDEDSDLSDDEPSAYSA. Residues serine 525 and serine 528 each carry the phosphoserine modification.

The protein belongs to the LIMR family. LMBRD1 subfamily. Interacts with ABCD4; this interaction induces the translocation of ABCD4 from the endoplasmic reticulum to the lysosome. Interacts with ABCD4 and MMACHC; this interaction ensures the transport of cobalamin from the lysosome to the cytoplasm. Interacts with INSR, adapter protein complex 2 and clathrin heavy chain. N-glycosylated.

The protein resides in the endoplasmic reticulum membrane. It localises to the lysosome membrane. It is found in the cell membrane. Its subcellular location is the cytoplasmic vesicle. The protein localises to the clathrin-coated vesicle. Lysosomal membrane chaperone required to export cobalamin (vitamin B12) from the lysosome to the cytosol, allowing its conversion to cofactors. Targets ABCD4 transporter from the endoplasmic reticulum to the lysosome. Then forms a complex with lysosomal ABCD4 and cytoplasmic MMACHC to transport cobalamin across the lysosomal membrane. Acts as an adapter protein which plays an important role in mediating and regulating the internalization of the insulin receptor (INSR). Involved in clathrin-mediated endocytosis of INSR via its interaction with adapter protein complex 2. Essential for the initiation of gastrulation and early formation of mesoderm structures during embryogenesis. This Mus musculus (Mouse) protein is Lysosomal cobalamin transport escort protein LMBD1.